Consider the following 428-residue polypeptide: Type II methyltransferase M.BanI (428 aa).

Residues 3 to 417 (IKFVDLFAGI…EDLFQNNVNE (415 aa)) form the SAM-dependent MTase C5-type domain. The active site involves Cys76.

Belongs to the class I-like SAM-binding methyltransferase superfamily. C5-methyltransferase family. In terms of assembly, monomer.

It carries out the reaction a 2'-deoxycytidine in DNA + S-adenosyl-L-methionine = a 5-methyl-2'-deoxycytidine in DNA + S-adenosyl-L-homocysteine + H(+). Its function is as follows. A methylase, recognizes the double-stranded sequence 5'-GGYRCC-3', methylates C-4 on both strands, and protects the DNA from cleavage by the BanI endonuclease. This chain is Type II methyltransferase M.BanI (banIM), found in Aneurinibacillus aneurinilyticus (Bacillus aneurinolyticus).